Consider the following 68-residue polypeptide: TxMMSK-03 (68 aa).

The signal sequence occupies residues 1–19 (MSKLGALLIICLLLFPLTA). A propeptide spanning residues 20 to 50 (VPMDGDQPADRPAERMQDDISFEQHPMFDAT) is cleaved from the precursor. Cystine bridges form between cysteine 53–cysteine 67, cysteine 54–cysteine 63, and cysteine 59–cysteine 66. A 4-hydroxyproline; partial modification is found at proline 65.

Post-translationally, contains 3 disulfide bonds. Expressed by the venom duct. Both hydroxylated and non-hydroxylated forms are mostly and only present in part 2 (proximal of the venom bulb) of the venom duct, respectively.

The protein resides in the secreted. In Conus textile (Cloth-of-gold cone), this protein is TxMMSK-03.